Consider the following 437-residue polypeptide: Enolase (437 aa).

Substrate is bound by residues H160 and E169. The active-site Proton donor is the E212. Positions 247, 296, and 321 each coordinate Mg(2+). Substrate contacts are provided by E296 and D321. The Proton acceptor role is filled by K346. Residues 373–376 (SHRS) and K397 contribute to the substrate site.

The protein belongs to the enolase family. As to quaternary structure, homodimer. It depends on Mg(2+) as a cofactor.

The protein resides in the cytoplasm. It carries out the reaction (2R)-2-phosphoglycerate = phosphoenolpyruvate + H2O. It functions in the pathway carbohydrate degradation; glycolysis; pyruvate from D-glyceraldehyde 3-phosphate: step 4/5. The sequence is that of Enolase (ENO) from Eremothecium gossypii (strain ATCC 10895 / CBS 109.51 / FGSC 9923 / NRRL Y-1056) (Yeast).